We begin with the raw amino-acid sequence, 243 residues long: Probable transcriptional regulatory protein Athe_0816 (243 aa).

Belongs to the TACO1 family.

It is found in the cytoplasm. The polypeptide is Probable transcriptional regulatory protein Athe_0816 (Caldicellulosiruptor bescii (strain ATCC BAA-1888 / DSM 6725 / KCTC 15123 / Z-1320) (Anaerocellum thermophilum)).